A 239-amino-acid polypeptide reads, in one-letter code: Purine nucleoside phosphorylase DeoD-type (239 aa).

A purine D-ribonucleoside is bound at residue His5. Phosphate is bound by residues Gly21, Arg25, Arg44, and 88-91 (RVGS). A purine D-ribonucleoside is bound by residues 180–182 (EME) and 204–205 (SD). The active-site Proton donor is Asp205.

The protein belongs to the PNP/UDP phosphorylase family. In terms of assembly, homohexamer; trimer of homodimers.

It catalyses the reaction a purine D-ribonucleoside + phosphate = a purine nucleobase + alpha-D-ribose 1-phosphate. It carries out the reaction a purine 2'-deoxy-D-ribonucleoside + phosphate = a purine nucleobase + 2-deoxy-alpha-D-ribose 1-phosphate. In terms of biological role, catalyzes the reversible phosphorolytic breakdown of the N-glycosidic bond in the beta-(deoxy)ribonucleoside molecules, with the formation of the corresponding free purine bases and pentose-1-phosphate. In Salmonella heidelberg (strain SL476), this protein is Purine nucleoside phosphorylase DeoD-type.